We begin with the raw amino-acid sequence, 307 residues long: Acetaldehyde dehydrogenase 2 (307 aa).

13–16 (SGNI) provides a ligand contact to NAD(+). The active-site Acyl-thioester intermediate is Cys-132. Residues 163-171 (SIGPGTRAN) and Asn-274 each bind NAD(+).

It belongs to the acetaldehyde dehydrogenase family.

The catalysed reaction is acetaldehyde + NAD(+) + CoA = acetyl-CoA + NADH + H(+). The protein is Acetaldehyde dehydrogenase 2 of Methylibium petroleiphilum (strain ATCC BAA-1232 / LMG 22953 / PM1).